The sequence spans 120 residues: Large ribosomal subunit protein uL22 (120 aa).

It belongs to the universal ribosomal protein uL22 family. Part of the 50S ribosomal subunit.

Its function is as follows. This protein binds specifically to 23S rRNA; its binding is stimulated by other ribosomal proteins, e.g. L4, L17, and L20. It is important during the early stages of 50S assembly. It makes multiple contacts with different domains of the 23S rRNA in the assembled 50S subunit and ribosome. In terms of biological role, the globular domain of the protein is located near the polypeptide exit tunnel on the outside of the subunit, while an extended beta-hairpin is found that lines the wall of the exit tunnel in the center of the 70S ribosome. This Corynebacterium urealyticum (strain ATCC 43042 / DSM 7109) protein is Large ribosomal subunit protein uL22.